Here is a 334-residue protein sequence, read N- to C-terminus: Ornithine carbamoyltransferase (334 aa).

Carbamoyl phosphate-binding positions include 57–60, glutamine 84, arginine 108, and 135–138; these read STRT and HPTQ. L-ornithine-binding positions include asparagine 168, aspartate 232, and 236 to 237; that span reads SM. Carbamoyl phosphate contacts are provided by residues 274-275 and arginine 321; that span reads CL.

This sequence belongs to the aspartate/ornithine carbamoyltransferase superfamily. OTCase family.

It is found in the cytoplasm. It carries out the reaction carbamoyl phosphate + L-ornithine = L-citrulline + phosphate + H(+). The protein operates within amino-acid biosynthesis; L-arginine biosynthesis; L-arginine from L-ornithine and carbamoyl phosphate: step 1/3. Reversibly catalyzes the transfer of the carbamoyl group from carbamoyl phosphate (CP) to the N(epsilon) atom of ornithine (ORN) to produce L-citrulline. The sequence is that of Ornithine carbamoyltransferase from Actinobacillus pleuropneumoniae serotype 5b (strain L20).